The primary structure comprises 251 residues: Isoprenyl transferase (251 aa).

The active site involves aspartate 24. Mg(2+) is bound at residue aspartate 24. Substrate contacts are provided by residues 25-28 (GNGR), tryptophan 29, arginine 37, histidine 41, and 69-71 (STE). The Proton acceptor role is filled by asparagine 72. Substrate contacts are provided by residues tryptophan 73, arginine 75, arginine 186, and 192–194 (RIS). Residue glutamate 205 participates in Mg(2+) binding.

Belongs to the UPP synthase family. In terms of assembly, homodimer. The cofactor is Mg(2+).

Catalyzes the condensation of isopentenyl diphosphate (IPP) with allylic pyrophosphates generating different type of terpenoids. The chain is Isoprenyl transferase from Chromobacterium violaceum (strain ATCC 12472 / DSM 30191 / JCM 1249 / CCUG 213 / NBRC 12614 / NCIMB 9131 / NCTC 9757 / MK).